A 321-amino-acid chain; its full sequence is Phospho-N-acetylmuramoyl-pentapeptide-transferase (321 aa).

10 helical membrane passes run 1–21, 50–70, 76–96, 112–132, 140–160, 176–196, 200–220, 225–245, 250–270, and 300–320; these read MIFV…PVLI, MGGL…IIFV, IILL…DDYI, FLAQ…FHLV, IPFT…IVFW, GLAT…SFVL, AIGI…PYNI, VFMG…ISIM, LSLI…MLQV, and VVTV…WIGV.

This sequence belongs to the glycosyltransferase 4 family. MraY subfamily. It depends on Mg(2+) as a cofactor.

The protein localises to the cell membrane. The catalysed reaction is UDP-N-acetyl-alpha-D-muramoyl-L-alanyl-gamma-D-glutamyl-L-lysyl-D-alanyl-D-alanine + di-trans,octa-cis-undecaprenyl phosphate = Mur2Ac(oyl-L-Ala-gamma-D-Glu-L-Lys-D-Ala-D-Ala)-di-trans,octa-cis-undecaprenyl diphosphate + UMP. It participates in cell wall biogenesis; peptidoglycan biosynthesis. In terms of biological role, catalyzes the initial step of the lipid cycle reactions in the biosynthesis of the cell wall peptidoglycan: transfers peptidoglycan precursor phospho-MurNAc-pentapeptide from UDP-MurNAc-pentapeptide onto the lipid carrier undecaprenyl phosphate, yielding undecaprenyl-pyrophosphoryl-MurNAc-pentapeptide, known as lipid I. This chain is Phospho-N-acetylmuramoyl-pentapeptide-transferase, found in Staphylococcus aureus (strain MSSA476).